Consider the following 1303-residue polypeptide: Zinc finger CCCH domain-containing protein 4 (1303 aa).

The span at 1–33 shows a compositional bias: pro residues; the sequence is MEAAPGTPPPPPSESPPPPSPPPPSTPSPPPCS. The tract at residues 1-388 is disordered; that stretch reads MEAAPGTPPP…RDHDKPHQQS (388 aa). The span at 53-73 shows a compositional bias: acidic residues; sequence DREDGELEEGELEDDGAEETQ. Phosphothreonine occurs at positions 72 and 75. Residues serine 76, serine 92, and serine 94 each carry the phosphoserine modification. Positions 80 to 99 are enriched in basic and acidic residues; the sequence is ERSRKEKGEKHHSDSDEEKS. Positions 95 to 128 form a coiled coil; it reads DEEKSHRRLKRKRKKEREKEKRRSKKRRKSKHKR. Residues 100–130 are compositionally biased toward basic residues; that stretch reads HRRLKRKRKKEREKEKRRSKKRRKSKHKRHA. The segment covering 135–144 has biased composition (acidic residues); it reads DFSDFSDDSD. Phosphotyrosine is present on tyrosine 155. Acidic residues predominate over residues 194–218; it reads EDYENEQYGEYEGDEEEDMGKEDYD. Basic and acidic residues predominate over residues 219 to 235; that stretch reads DFTKELNQYRRAKEGSS. Over residues 238-251 the composition is skewed to basic residues; the sequence is RGSRGRGRGYRGRG. Gly residues predominate over residues 252 to 274; that stretch reads SRGGSRGRGMGRGSRGRGRGSMG. Acidic residues predominate over residues 278-304; sequence PEDEEDFYEEEMDYGESEEPMGDDDYD. Over residues 305–321 the composition is skewed to basic and acidic residues; the sequence is EYSKELNQYRRSKDSRG. The span at 323-346 shows a compositional bias: basic residues; that stretch reads GLSRGRGRGSRGRGKGMGRGRGRG. The segment covering 358 to 369 has biased composition (acidic residues); the sequence is NDDEDFYDEDMG. Residues 377-388 are compositionally biased toward basic and acidic residues; the sequence is RSRDHDKPHQQS. 3 C3H1-type zinc fingers span residues 390 to 417, 419 to 446, and 447 to 470; these read KKGK…HDIE, PKKR…HGDF, and PCKL…HDPL. The segment covering 486-496 has biased composition (acidic residues); sequence AEAGAEDEKEV. A disordered region spans residues 486–571; the sequence is AEAGAEDEKE…HEPLSPQQLQ (86 aa). Composition is skewed to pro residues over residues 507-529 and 539-558; these read LPKP…PQAP and GGPP…PQMP. At arginine 601 the chain carries Asymmetric dimethylarginine. The segment covering 605 to 624 has biased composition (pro residues); it reads PGGPPGPMGPGPNMGPPGPM. Disordered regions lie at residues 605–685, 710–955, and 996–1288; these read PGGP…SGMM, GLLG…PRSQ, and PPVP…ASLK. Residues 630-650 show a composition bias toward basic and acidic residues; sequence PDMHPDMHPDMHPDMHADMHA. Pro residues predominate over residues 659 to 673; that stretch reads NPGPPMGPGGPPMMP. 2 stretches are compositionally biased toward basic and acidic residues: residues 717 to 739 and 782 to 795; these read DYGH…HPLE and ERAR…KQDR. Positions 767–800 form a coiled coil; the sequence is RALYLRIQQKQQEEEERARRLAESSKQDRENEEG. 2 positions are modified to phosphoserine: serine 807 and serine 808. Over residues 815-843 the composition is skewed to polar residues; sequence SSVTSILKTLRQQTSSRPPASVGELSSSG. Positions 860–875 are enriched in basic and acidic residues; the sequence is ADPRLSRDPRLTRHVE. Residues serine 904, serine 907, and serine 908 each carry the phosphoserine modification. A compositionally biased stretch (low complexity) spans 904 to 918; the sequence is SLHSSPVGPSSSKGS. 2 stretches are compositionally biased toward polar residues: residues 1028 to 1038 and 1053 to 1062; these read GASTDSSTQGA and VNATGSSAAP. Over residues 1067 to 1084 the composition is skewed to basic and acidic residues; sequence KPSDPRVRKAPTDPRLQK. Low complexity predominate over residues 1097–1110; that stretch reads PGPAEAPSPTASPS. The residue at position 1104 (serine 1104) is a Phosphoserine. Threonine 1106 is subject to Phosphothreonine. Serine 1108, serine 1110, and serine 1114 each carry phosphoserine. Phosphothreonine is present on threonine 1118. The span at 1129–1139 shows a compositional bias: gly residues; sequence GGLGQGGGGGQ. Over residues 1224–1234 the composition is skewed to low complexity; the sequence is KAAAAPAATTA. Over residues 1235–1245 the composition is skewed to pro residues; the sequence is TPPPEGAPPQP. Positions 1259-1268 are enriched in polar residues; sequence VKQTPKTGSG. A phosphoserine mark is found at serine 1269 and serine 1275.

It belongs to the suppressor of sable family. In terms of assembly, interacts with WDR82.

It is found in the chromosome. In terms of biological role, RNA-binding protein that suppresses transcription of long non-coding RNAs (lncRNAs). LncRNAs are defined as transcripts more than 200 nucleotides that are not translated into protein. Together with WDR82, part of a transcription termination checkpoint that promotes transcription termination of lncRNAs and their subsequent degradation by the exosome. The transcription termination checkpoint is activated by the inefficiently spliced first exon of lncRNAs. This is Zinc finger CCCH domain-containing protein 4 from Homo sapiens (Human).